A 129-amino-acid polypeptide reads, in one-letter code: UPF0148 protein APE_0207 (129 aa).

Belongs to the UPF0148 family.

This chain is UPF0148 protein APE_0207, found in Aeropyrum pernix (strain ATCC 700893 / DSM 11879 / JCM 9820 / NBRC 100138 / K1).